A 320-amino-acid chain; its full sequence is Cytochrome f (320 aa).

A signal peptide spans 1–35; sequence MQNRNTFSWVKDQMSRFISVSIMIYVITRTSISNA. Positions 36, 56, 59, and 60 each coordinate heme. A helical transmembrane segment spans residues 286–306; the sequence is VQGLLFFFASVILAQIFLVLK.

It belongs to the cytochrome f family. In terms of assembly, the 4 large subunits of the cytochrome b6-f complex are cytochrome b6, subunit IV (17 kDa polypeptide, petD), cytochrome f and the Rieske protein, while the 4 small subunits are PetG, PetL, PetM and PetN. The complex functions as a dimer. Heme serves as cofactor.

Its subcellular location is the plastid. It localises to the chloroplast thylakoid membrane. Component of the cytochrome b6-f complex, which mediates electron transfer between photosystem II (PSII) and photosystem I (PSI), cyclic electron flow around PSI, and state transitions. This is Cytochrome f from Ceratophyllum demersum (Rigid hornwort).